We begin with the raw amino-acid sequence, 439 residues long: Dolichyl-diphosphooligosaccharide--protein glycosyltransferase 48 kDa subunit (439 aa).

Positions 1-26 (MEPSTAARAWALFWLLPPLLGAVCAS) are cleaved as a signal peptide. The Lumenal portion of the chain corresponds to 27 to 410 (GPRTLVLLDN…YERFIPSAYP (384 aa)). A helical transmembrane segment spans residues 411–430 (YYASAFSMMLGLFIFSIVFL). Residues 431–439 (HMKEKEKSD) are Cytoplasmic-facing.

This sequence belongs to the DDOST 48 kDa subunit family. Component of the oligosaccharyltransferase (OST) complex. OST exists in two different complex forms which contain common core subunits RPN1, RPN2, OST48, OST4, DAD1 and TMEM258, either STT3A or STT3B as catalytic subunits, and form-specific accessory subunits. STT3A complex assembly occurs through the formation of 3 subcomplexes. Subcomplex 1 contains RPN1 and TMEM258, subcomplex 2 contains the STT3A-specific subunits STT3A, DC2/OSTC, and KCP2 as well as the core subunit OST4, and subcomplex 3 contains RPN2, DAD1, and OST48. The STT3A complex can form stable complexes with the Sec61 complex or with both the Sec61 and TRAP complexes. Interacts with SMIM22.

Its subcellular location is the endoplasmic reticulum membrane. Its pathway is protein modification; protein glycosylation. Its function is as follows. Subunit of the oligosaccharyl transferase (OST) complex that catalyzes the initial transfer of a defined glycan (Glc(3)Man(9)GlcNAc(2) in eukaryotes) from the lipid carrier dolichol-pyrophosphate to an asparagine residue within an Asn-X-Ser/Thr consensus motif in nascent polypeptide chains, the first step in protein N-glycosylation. N-glycosylation occurs cotranslationally and the complex associates with the Sec61 complex at the channel-forming translocon complex that mediates protein translocation across the endoplasmic reticulum (ER). All subunits are required for a maximal enzyme activity. Required for the assembly of both SST3A- and SS3B-containing OST complexes. This Pongo abelii (Sumatran orangutan) protein is Dolichyl-diphosphooligosaccharide--protein glycosyltransferase 48 kDa subunit.